Reading from the N-terminus, the 485-residue chain is Glutamyl-tRNA(Gln) amidotransferase subunit A (485 aa).

Residues lysine 79 and serine 154 each act as charge relay system in the active site. Serine 178 acts as the Acyl-ester intermediate in catalysis.

The protein belongs to the amidase family. GatA subfamily. In terms of assembly, heterotrimer of A, B and C subunits.

It carries out the reaction L-glutamyl-tRNA(Gln) + L-glutamine + ATP + H2O = L-glutaminyl-tRNA(Gln) + L-glutamate + ADP + phosphate + H(+). Its function is as follows. Allows the formation of correctly charged Gln-tRNA(Gln) through the transamidation of misacylated Glu-tRNA(Gln) in organisms which lack glutaminyl-tRNA synthetase. The reaction takes place in the presence of glutamine and ATP through an activated gamma-phospho-Glu-tRNA(Gln). The sequence is that of Glutamyl-tRNA(Gln) amidotransferase subunit A from Clostridium botulinum (strain Kyoto / Type A2).